The chain runs to 74 residues: Beta-defensin 39 (74 aa).

The N-terminal stretch at 1–23 (MKISYFLLLILSLGSSQINPVSG) is a signal peptide. Disulfide bonds link Cys29-Cys58, Cys36-Cys51, and Cys41-Cys59.

It belongs to the beta-defensin family. As to expression, only expressed in epididymis (caput, corpus and cauda).

It is found in the secreted. Has antibacterial activity. The chain is Beta-defensin 39 (Defb39) from Mus musculus (Mouse).